A 463-amino-acid polypeptide reads, in one-letter code: UDP-glucosyltransferase A1 (463 aa).

This sequence belongs to the UDP-glycosyltransferase family.

The catalysed reaction is 18-hydroxy-(9Z)-octadecenoate + UDP-alpha-D-glucose = (9Z)-18-hydroxyoctadec-9-enoate 18-O-beta-D-glucoside + UDP + H(+). It carries out the reaction 17-hydroxy-(9Z)-octadecenoate + UDP-alpha-D-glucose = (9Z)-17-hydroxyoctadec-9-enoate 17-O-beta-D-glucoside + UDP + H(+). Functionally, catalyzes the first glycosylation step of sophorolipid biosynthesis, the coupling of glucose to a hydroxylated fatty acid to give rise to a glucolipid. Can glycosylate all hydroxyl fatty acids generated by cytochrome P450 monooxygenases CYP52M1, CYP52N1 and CYP52E3 into their corresponding glucolipids. Main products are 17-O- and 18-O-(beta-D-glucopyranosyl)-octadecenoic acids. This Starmerella bombicola (Yeast) protein is UDP-glucosyltransferase A1.